Here is a 428-residue protein sequence, read N- to C-terminus: Enolase (428 aa).

Gln-164 is a binding site for (2R)-2-phosphoglycerate. Glu-208 functions as the Proton donor in the catalytic mechanism. Mg(2+) is bound by residues Asp-245, Glu-286, and Asp-313. The (2R)-2-phosphoglycerate site is built by Lys-338, Arg-367, Ser-368, and Lys-389. The active-site Proton acceptor is the Lys-338.

This sequence belongs to the enolase family. It depends on Mg(2+) as a cofactor.

Its subcellular location is the cytoplasm. The protein localises to the secreted. The protein resides in the cell surface. The catalysed reaction is (2R)-2-phosphoglycerate = phosphoenolpyruvate + H2O. The protein operates within carbohydrate degradation; glycolysis; pyruvate from D-glyceraldehyde 3-phosphate: step 4/5. Its function is as follows. Catalyzes the reversible conversion of 2-phosphoglycerate (2-PG) into phosphoenolpyruvate (PEP). It is essential for the degradation of carbohydrates via glycolysis. The protein is Enolase of Pyrococcus horikoshii (strain ATCC 700860 / DSM 12428 / JCM 9974 / NBRC 100139 / OT-3).